The primary structure comprises 428 residues: 2-isopropylmalate synthase 2 (428 aa).

Positions 40-302 (PFFMDVTLRD…EVPLNFSTIY (263 aa)) constitute a Pyruvate carboxyltransferase domain. Mn(2+)-binding residues include D49, H241, H243, and N277.

Belongs to the alpha-IPM synthase/homocitrate synthase family. LeuA type 1 subfamily. Homodimer. Requires Mn(2+) as cofactor.

The protein localises to the cytoplasm. The catalysed reaction is 3-methyl-2-oxobutanoate + acetyl-CoA + H2O = (2S)-2-isopropylmalate + CoA + H(+). It participates in amino-acid biosynthesis; L-leucine biosynthesis; L-leucine from 3-methyl-2-oxobutanoate: step 1/4. Catalyzes the condensation of the acetyl group of acetyl-CoA with 3-methyl-2-oxobutanoate (2-ketoisovalerate) to form 3-carboxy-3-hydroxy-4-methylpentanoate (2-isopropylmalate). Has high alpha-isopropylmalate synthase activity and low citramalate synthase activity. The sequence is that of 2-isopropylmalate synthase 2 from Leptospira interrogans serogroup Icterohaemorrhagiae serovar Lai (strain 56601).